The sequence spans 170 residues: Ribosome maturation factor RimM (170 aa).

Residues histidine 97–phenylalanine 170 enclose the PRC barrel domain.

Belongs to the RimM family. In terms of assembly, binds ribosomal protein uS19.

It localises to the cytoplasm. In terms of biological role, an accessory protein needed during the final step in the assembly of 30S ribosomal subunit, possibly for assembly of the head region. Essential for efficient processing of 16S rRNA. May be needed both before and after RbfA during the maturation of 16S rRNA. It has affinity for free ribosomal 30S subunits but not for 70S ribosomes. This Xylella fastidiosa (strain M23) protein is Ribosome maturation factor RimM.